A 155-amino-acid chain; its full sequence is Interleukin-2 (155 aa).

Positions 1–20 (MYRMQLLSCIALTLALVANG) are cleaved as a signal peptide. Thr23 carries O-linked (GalNAc...) threonine glycosylation. A disulfide bond links Cys79 and Cys127.

The protein belongs to the IL-2 family.

Its subcellular location is the secreted. Cytokine produced by activated CD4-positive helper T-cells and to a lesser extend activated CD8-positive T-cells and natural killer (NK) cells that plays pivotal roles in the immune response and tolerance. Binds to a receptor complex composed of either the high-affinity trimeric IL-2R (IL2RA/CD25, IL2RB/CD122 and IL2RG/CD132) or the low-affinity dimeric IL-2R (IL2RB and IL2RG). Interaction with the receptor leads to oligomerization and conformation changes in the IL-2R subunits resulting in downstream signaling starting with phosphorylation of JAK1 and JAK3. In turn, JAK1 and JAK3 phosphorylate the receptor to form a docking site leading to the phosphorylation of several substrates including STAT5. This process leads to activation of several pathways including STAT, phosphoinositide-3-kinase/PI3K and mitogen-activated protein kinase/MAPK pathways. Functions as a T-cell growth factor and can increase NK-cell cytolytic activity as well. Promotes strong proliferation of activated B-cells and subsequently immunoglobulin production. Plays a pivotal role in regulating the adaptive immune system by controlling the survival and proliferation of regulatory T-cells, which are required for the maintenance of immune tolerance. Moreover, participates in the differentiation and homeostasis of effector T-cell subsets, including Th1, Th2, Th17 as well as memory CD8-positive T-cells. The polypeptide is Interleukin-2 (IL2) (Capra hircus (Goat)).